The primary structure comprises 686 residues: Gamma-aminobutyric acid receptor alpha-like (686 aa).

A signal peptide spans 1–58; the sequence is MCTMPATRDASGSGDASTDLIAARSLSSHQGQRSNLRIFKLLISCCLLMLCIYPNAWP. Topologically, residues 97–393 are extracellular; the sequence is SSWLTQSNNH…NFHLQRHMGN (297 aa). Asn-108 carries an N-linked (GlcNAc...) asparagine glycan. Cys-233 and Cys-247 are joined by a disulfide. N-linked (GlcNAc...) asparagine glycosylation occurs at Asn-292. The next 3 membrane-spanning stretches (helical) occupy residues 394 to 414, 424 to 441, and 456 to 476; these read FLIQ…VSFW, VSLG…GLEA, and FFVF…AVVH. Over 477–650 the chain is Cytoplasmic; it reads YYTKYGSGEC…YNSVSKIDRA (174 aa). A disordered region spans residues 570-641; it reads KPPRADSDED…RRKGKRTPQY (72 aa). Residues 586–596 are compositionally biased toward polar residues; it reads QLRANEAPTTS. Over residues 597-609 the composition is skewed to low complexity; sequence AAAAAAQAAAQAA. A helical transmembrane segment spans residues 651 to 671; that stretch reads SRIVFPLLFILINVFYWYGYL.

It belongs to the ligand-gated ion channel (TC 1.A.9) family. Gamma-aminobutyric acid receptor (TC 1.A.9.5) subfamily. As to quaternary structure, generally pentameric. There are five types of GABA(A) receptor chains: alpha, beta, gamma, delta, and rho. Interacts with Lcch3 (beta chain).

The protein resides in the postsynaptic cell membrane. It is found in the cell membrane. GABA, an inhibitory neurotransmitter, mediates neuronal inhibition by binding to the GABA receptor and opening an integral chloride channel. May combine with the ligand-gated ion channel subunit Lcch3 to form cation-selective GABA-gated ion channels. The protein is Gamma-aminobutyric acid receptor alpha-like (Grd) of Drosophila melanogaster (Fruit fly).